The sequence spans 161 residues: Large ribosomal subunit protein eL21 (161 aa).

It belongs to the eukaryotic ribosomal protein eL21 family.

In Caenorhabditis elegans, this protein is Large ribosomal subunit protein eL21 (rpl-21).